The following is a 209-amino-acid chain: Protein TIFY 11c (209 aa).

One can recognise a Tify domain in the interval 93–128; that stretch reads EITEKAQLTIFYGGSVVVFDDFPAEKAGELMKLAGS. Residues 153–177 carry the Jas motif; it reads PIARKVSLQRFLEKRKNRIVVAEPL. A Nuclear localization signal motif is present at residues 155–162; it reads ARKVSLQR. Residues 175 to 209 form a disordered region; sequence EPLPESEKKEAESSKRAKKDDGGASWLQVNPTLSL. A compositionally biased stretch (basic and acidic residues) spans 179–196; sequence ESEKKEAESSKRAKKDDG.

This sequence belongs to the TIFY/JAZ family. In terms of processing, ubiquitinated. Targeted for degradation by the SCF(COI1) E3 ubiquitin ligase-proteasome pathway during jasmonate signaling.

Its subcellular location is the nucleus. Its function is as follows. Repressor of jasmonate responses. The sequence is that of Protein TIFY 11c from Oryza sativa subsp. indica (Rice).